A 120-amino-acid polypeptide reads, in one-letter code: Small ribosomal subunit protein uS17m (120 aa).

A mitochondrion-targeting transit peptide spans 1-20 (MSIVRSSVHAKWVVGKVIGT).

Belongs to the universal ribosomal protein uS17 family. Component of the mitochondrial ribosome small subunit (28S) which comprises a 12S rRNA and about 30 distinct proteins.

Its subcellular location is the mitochondrion. The chain is Small ribosomal subunit protein uS17m (Mrps17) from Mus musculus (Mouse).